A 423-amino-acid polypeptide reads, in one-letter code: Mannan endo-1,4-beta-mannosidase (423 aa).

The N-terminal stretch at 1 to 27 is a signal peptide; it reads MKTITTARLPWAAQSFALGICLIALLG. Residues 56–409 form the GH26 domain; that stretch reads METRSLFAFM…YADEFTAFNR (354 aa). Positions 121, 143, and 162 each coordinate substrate. The active-site Proton donor is glutamate 212. The substrate site is built by tryptophan 217 and tyrosine 285. Glutamate 320 acts as the Nucleophile in catalysis. Residues 360 to 361 and histidine 377 each bind substrate; that span reads WR.

This sequence belongs to the glycosyl hydrolase 26 family. In terms of assembly, homodimer.

It catalyses the reaction Random hydrolysis of (1-&gt;4)-beta-D-mannosidic linkages in mannans, galactomannans and glucomannans.. In terms of biological role, catalyzes the endo hydrolysis of beta-1,4-linked mannan and galactomannan, but displays little activity towards other polysaccharides located in the plant cell wall. Preferentially hydrolyzes the larger oligosaccharides and has greater activity against non-substituted polysaccharides. It displays tight specificity for mannose at both the -2 and the -1 subsites. Appears to act in synergy with alpha-galactosidase (AgaA) to elicit hydrolysis of galactomannan. This Cellvibrio japonicus (strain Ueda107) (Pseudomonas fluorescens subsp. cellulosa) protein is Mannan endo-1,4-beta-mannosidase.